Here is a 185-residue protein sequence, read N- to C-terminus: MRKDAKENRQRIEEIAHKLFDEEGVENISMNRIAKELGIGMGTLYRHFKDKSDLCYYVIQRDLDIFITHFKQIKDDYHSNYEVMQVSLDYLLQFKIDNKALLQCIEAGNNKLRFYQSAFYQELFDFYYDLFKSDDDTYTKFKTDMLLQSLSTSVFAFQIEHRHISIEAYRNYLLNIYLDEVERND.

One can recognise an HTH tetR-type domain in the interval 6-66 (KENRQRIEEI…YVIQRDLDIF (61 aa)). Positions 29–48 (SMNRIAKELGIGMGTLYRHF) form a DNA-binding region, H-T-H motif.

This Staphylococcus aureus (strain N315) protein is HTH-type transcriptional regulator SA2364.